Consider the following 471-residue polypeptide: Tigger transposable element-derived protein 3 (471 aa).

In terms of domain architecture, HTH psq-type spans Leu-3–Leu-55. 2 DNA-binding regions (H-T-H motif) span residues Gln-31–Asn-51 and Pro-100–Arg-130. Residues Glu-67–Ala-137 enclose the HTH CENPB-type domain. The 194-residue stretch at Phe-167–Phe-360 folds into the DDE-1 domain.

It belongs to the tigger transposable element derived protein family.

Its subcellular location is the nucleus. The sequence is that of Tigger transposable element-derived protein 3 (TIGD3) from Homo sapiens (Human).